The following is a 378-amino-acid chain: Branched-chain-amino-acid aminotransferase (378 aa).

Lysine 213 carries the N6-(pyridoxal phosphate)lysine modification.

This sequence belongs to the class-IV pyridoxal-phosphate-dependent aminotransferase family. Homodimer. The cofactor is pyridoxal 5'-phosphate.

The catalysed reaction is L-leucine + 2-oxoglutarate = 4-methyl-2-oxopentanoate + L-glutamate. It catalyses the reaction L-isoleucine + 2-oxoglutarate = (S)-3-methyl-2-oxopentanoate + L-glutamate. The enzyme catalyses L-valine + 2-oxoglutarate = 3-methyl-2-oxobutanoate + L-glutamate. Its function is as follows. Catalyzes the first reaction in the catabolism of the essential branched chain amino acids leucine, isoleucine, and valine. The protein is Branched-chain-amino-acid aminotransferase (bcaA) of Dictyostelium discoideum (Social amoeba).